The chain runs to 385 residues: Anhydro-N-acetylmuramic acid kinase (385 aa).

12-19 (GTSLDGID) contributes to the ATP binding site.

This sequence belongs to the anhydro-N-acetylmuramic acid kinase family.

The catalysed reaction is 1,6-anhydro-N-acetyl-beta-muramate + ATP + H2O = N-acetyl-D-muramate 6-phosphate + ADP + H(+). Its pathway is amino-sugar metabolism; 1,6-anhydro-N-acetylmuramate degradation. The protein operates within cell wall biogenesis; peptidoglycan recycling. Its function is as follows. Catalyzes the specific phosphorylation of 1,6-anhydro-N-acetylmuramic acid (anhMurNAc) with the simultaneous cleavage of the 1,6-anhydro ring, generating MurNAc-6-P. Is required for the utilization of anhMurNAc either imported from the medium or derived from its own cell wall murein, and thus plays a role in cell wall recycling. The chain is Anhydro-N-acetylmuramic acid kinase from Bacillus thuringiensis (strain Al Hakam).